A 166-amino-acid chain; its full sequence is uncharacterized protein (166 aa).

3 stretches are compositionally biased toward basic and acidic residues: residues Met1 to Ser13, Lys21 to Glu112, and Asp119 to Gly137. The tract at residues Met1–Thr144 is disordered. Tandem repeats lie at residues Asp31–Lys41, Asp42–Lys52, Asp53–Lys63, Asp64–Lys74, Asp75–Lys85, Asp86–Lys96, Asp97–Lys107, and Asp108–Arg118. The tract at residues Asp31 to Arg118 is 8 X 11 AA approximate tandem repeats of D-K-T-K-E-T-A-G/E-S-A-K.

Belongs to the LEA type 1 family.

This is an uncharacterized protein from Encephalitozoon cuniculi (strain GB-M1) (Microsporidian parasite).